Here is a 574-residue protein sequence, read N- to C-terminus: Proline--tRNA ligase (574 aa).

The protein belongs to the class-II aminoacyl-tRNA synthetase family. ProS type 1 subfamily. In terms of assembly, homodimer.

The protein resides in the cytoplasm. It catalyses the reaction tRNA(Pro) + L-proline + ATP = L-prolyl-tRNA(Pro) + AMP + diphosphate. Its function is as follows. Catalyzes the attachment of proline to tRNA(Pro) in a two-step reaction: proline is first activated by ATP to form Pro-AMP and then transferred to the acceptor end of tRNA(Pro). As ProRS can inadvertently accommodate and process non-cognate amino acids such as alanine and cysteine, to avoid such errors it has two additional distinct editing activities against alanine. One activity is designated as 'pretransfer' editing and involves the tRNA(Pro)-independent hydrolysis of activated Ala-AMP. The other activity is designated 'posttransfer' editing and involves deacylation of mischarged Ala-tRNA(Pro). The misacylated Cys-tRNA(Pro) is not edited by ProRS. The sequence is that of Proline--tRNA ligase from Pseudoalteromonas translucida (strain TAC 125).